A 957-amino-acid chain; its full sequence is Sorting nexin-13 (957 aa).

The region spanning 97 to 284 is the PXA domain; it reads ANIIDEPLQQ…YVIWMIRDSN (188 aa). The RGS domain maps to 373 to 511; sequence PLDSILVDNV…SFRQNALYVR (139 aa). The 122-residue stretch at 559–680 folds into the PX domain; it reads VQLHAYISDT…DFLENKAYSK (122 aa). A 1,2-diacyl-sn-glycero-3-phospho-(1D-myo-inositol-3-phosphate)-binding residues include Arg-601, Ser-603, Lys-628, and Arg-642.

The protein belongs to the sorting nexin family.

The protein resides in the early endosome membrane. Functionally, may be involved in several stages of intracellular trafficking. Acts as a GAP for Galphas. May play a role in endosome homeostasis. The protein is Sorting nexin-13 (Snx13) of Mus musculus (Mouse).